The chain runs to 810 residues: Plasminogen (810 aa).

The signal sequence occupies residues 1–19; it reads MEHKEVVLLLLLFLKSGQG. The 79-residue stretch at 20-98 folds into the PAN domain; it reads EPLDDYVNTK…RDVVLFEKKV (79 aa). Intrachain disulfides connect C49–C73, C53–C61, C103–C181, C124–C164, C152–C176, C185–C262, C188–C316, C206–C245, C234–C257, C275–C352, C296–C335, and C324–C347. 3 consecutive Kringle domains span residues 103–181, 184–262, and 275–352; these read CKTG…IPEC, ECMH…IPRC, and CLKG…IPSC. A compositionally biased stretch (polar residues) spans 125 to 141; that stretch reads QKWSSTSPHRPTFSPAT. Positions 125 to 145 are disordered; sequence QKWSSTSPHRPTFSPATHPSE. The L-lysine site is built by T136, D158, and R172. T365 carries an O-linked (GalNAc...) threonine glycan. Disulfide bonds link C377–C454, C398–C437, C426–C449, C481–C560, C502–C543, C531–C555, C567–C685, C577–C585, and C607–C623. Kringle domains lie at 377 to 454 and 481 to 560; these read CYHG…LKKC and CMFG…VPQC. L-lysine is bound by residues D432 and R445. In terms of domain architecture, Peptidase S1 spans 581 to 808; it reads VVGGCVAYPH…FVTWIEGVMR (228 aa). S597 bears the Phosphoserine mark. Active-site charge relay system residues include H622 and D665. S688 is modified (phosphoserine). 3 cysteine pairs are disulfide-bonded: C699/C766, C729/C745, and C756/C784. Residue S760 is the Charge relay system of the active site.

This sequence belongs to the peptidase S1 family. Plasminogen subfamily. In terms of assembly, interacts with CSPG4 and AMOT. Interacts (via the Kringle domains) with HRG; the interaction tethers PLG to the cell surface and enhances its activation. Interacts (via Kringle 4 domain) with ADA; the interaction stimulates PLG activation when in complex with DPP4. Angiostatin: Interacts with ATP5F1A; the interaction inhibits most of the angiogenic effects of angiostatin. Post-translationally, in the presence of the inhibitor, the activation involves only cleavage after Arg-580, yielding two chains held together by two disulfide bonds. In the absence of the inhibitor, the activation involves additionally the removal of the activation peptide.

The protein localises to the secreted. The catalysed reaction is Preferential cleavage: Lys-|-Xaa &gt; Arg-|-Xaa, higher selectivity than trypsin. Converts fibrin into soluble products.. With respect to regulation, converted into plasmin by plasminogen activators, both plasminogen and its activator being bound to fibrin. Activated with catalytic amounts of streptokinase. Its function is as follows. Plasmin dissolves the fibrin of blood clots and acts as a proteolytic factor in a variety of other processes including embryonic development, tissue remodeling, tumor invasion, and inflammation. In ovulation, weakens the walls of the Graafian follicle. It activates the urokinase-type plasminogen activator, collagenases and several complement zymogens, such as C1, C4 and C5. Cleavage of fibronectin and laminin leads to cell detachment and apoptosis. Also cleaves fibrin, thrombospondin and von Willebrand factor. Its role in tissue remodeling and tumor invasion may be modulated by CSPG4. Binds to cells. This chain is Plasminogen (PLG), found in Macaca mulatta (Rhesus macaque).